The sequence spans 154 residues: 6,7-dimethyl-8-ribityllumazine synthase (154 aa).

5-amino-6-(D-ribitylamino)uracil contacts are provided by residues Phe22–Asn23, Ala56–Glu58, and Thr80–Ile82. Ala85–Thr86 is a binding site for (2S)-2-hydroxy-3-oxobutyl phosphate. Residue His88 is the Proton donor of the active site. Phe113 contributes to the 5-amino-6-(D-ribitylamino)uracil binding site. Arg127 is a (2S)-2-hydroxy-3-oxobutyl phosphate binding site.

It belongs to the DMRL synthase family. As to quaternary structure, forms an icosahedral capsid composed of 60 subunits, arranged as a dodecamer of pentamers. Can interact with riboflavin synthase, forming a lumazine synthase/riboflavin synthase complex, also designated as 'heavy riboflavin synthase complex', which consists of a trimer of riboflavin synthase enclosed within the icosahedral structure composed of 60 subunits of 6,7-dimethyl-8-ribityllumazine synthase.

The catalysed reaction is (2S)-2-hydroxy-3-oxobutyl phosphate + 5-amino-6-(D-ribitylamino)uracil = 6,7-dimethyl-8-(1-D-ribityl)lumazine + phosphate + 2 H2O + H(+). Its pathway is cofactor biosynthesis; riboflavin biosynthesis; riboflavin from 2-hydroxy-3-oxobutyl phosphate and 5-amino-6-(D-ribitylamino)uracil: step 1/2. Catalyzes the formation of 6,7-dimethyl-8-ribityllumazine by condensation of 5-amino-6-(D-ribitylamino)uracil with 3,4-dihydroxy-2-butanone 4-phosphate. This is the penultimate step in the biosynthesis of riboflavin. Is able to use the non-natural R enantiomer of 3,4-dihydroxy-2-butanone 4-phosphate as a substrate, but with less efficiency than the natural S enantiomer. Cannot use unphosphorylated 3,4-dihydroxy-2-butanone, 3,4-dihydroxy-2-butanone 3-phosphate or diacetyl as substrates. This chain is 6,7-dimethyl-8-ribityllumazine synthase (ribH), found in Bacillus subtilis (strain 168).